A 250-amino-acid polypeptide reads, in one-letter code: Uracil-DNA glycosylase (250 aa).

The active-site Proton acceptor is the D91.

It belongs to the uracil-DNA glycosylase (UDG) superfamily. UNG family.

The protein localises to the host nucleus. It carries out the reaction Hydrolyzes single-stranded DNA or mismatched double-stranded DNA and polynucleotides, releasing free uracil.. Its function is as follows. Excises uracil residues from the DNA which can arise as a result of misincorporation of dUMP residues by DNA polymerase or due to deamination of cytosine. Functionally, excises uracil residues from the DNA which can arise as a result of misincorporation of dUMP residues by DNA polymerase or deamination of cytosines. Therefore may reduce deleterious uracil incorporation into the viral genome, particularly in terminally differentiated cells which lack DNA repair enzymes. The sequence is that of Uracil-DNA glycosylase (UL114) from Homo sapiens (Human).